Reading from the N-terminus, the 451-residue chain is Tubulin alpha-2 chain (451 aa).

Residue glutamine 11 participates in GTP binding. At lysine 40 the chain carries N6-acetyllysine. The GTP site is built by glutamate 71, serine 140, glycine 144, threonine 145, threonine 179, asparagine 206, and asparagine 228. Glutamate 71 is a Mg(2+) binding site. The active site involves glutamate 254. A disordered region spans residues 432 to 451; sequence YEEVGIDTADGEDDEEANDY.

Belongs to the tubulin family. As to quaternary structure, dimer of alpha and beta chains. A typical microtubule is a hollow water-filled tube with an outer diameter of 25 nm and an inner diameter of 15 nM. Alpha-beta heterodimers associate head-to-tail to form protofilaments running lengthwise along the microtubule wall with the beta-tubulin subunit facing the microtubule plus end conferring a structural polarity. Microtubules usually have 13 protofilaments but different protofilament numbers can be found in some organisms and specialized cells. It depends on Mg(2+) as a cofactor. Post-translationally, undergoes a tyrosination/detyrosination cycle, the cyclic removal and re-addition of a C-terminal tyrosine residue by the enzymes tubulin tyrosine carboxypeptidase (TTCP) and tubulin tyrosine ligase (TTL), respectively. Acetylation of alpha chains at Lys-40 stabilizes microtubules and affects affinity and processivity of microtubule motors. This modification has a role in multiple cellular functions, ranging from cell motility, cell cycle progression or cell differentiation to intracellular trafficking and signaling.

The protein resides in the cytoplasm. Its subcellular location is the cytoskeleton. It catalyses the reaction GTP + H2O = GDP + phosphate + H(+). Its function is as follows. Tubulin is the major constituent of microtubules, a cylinder consisting of laterally associated linear protofilaments composed of alpha- and beta-tubulin heterodimers. Microtubules grow by the addition of GTP-tubulin dimers to the microtubule end, where a stabilizing cap forms. Below the cap, tubulin dimers are in GDP-bound state, owing to GTPase activity of alpha-tubulin. The protein is Tubulin alpha-2 chain of Homarus americanus (American lobster).